The following is a 54-amino-acid chain: UPF0391 membrane protein TERTU_3637 (54 aa).

2 helical membrane passes run Trp-4 to Ala-24 and Ser-29 to Gly-49.

The protein belongs to the UPF0391 family.

The protein localises to the cell membrane. This is UPF0391 membrane protein TERTU_3637 from Teredinibacter turnerae (strain ATCC 39867 / T7901).